Here is a 31-residue protein sequence, read N- to C-terminus: Cytochrome b6-f complex subunit 6 (31 aa).

The chain crosses the membrane as a helical span at residues 7–25; sequence YSGFLLAAPIPASAPFTGL.

The protein belongs to the PetL family. As to quaternary structure, the 4 large subunits of the cytochrome b6-f complex are cytochrome b6, subunit IV (17 kDa polypeptide, PetD), cytochrome f and the Rieske protein, while the 4 small subunits are PetG, PetL, PetM and PetN. The complex functions as a dimer.

The protein resides in the plastid. Its subcellular location is the chloroplast thylakoid membrane. Component of the cytochrome b6-f complex, which mediates electron transfer between photosystem II (PSII) and photosystem I (PSI), cyclic electron flow around PSI, and state transitions. PetL is important for photoautotrophic growth as well as for electron transfer efficiency and stability of the cytochrome b6-f complex. In Huperzia lucidula (Shining clubmoss), this protein is Cytochrome b6-f complex subunit 6.